Consider the following 438-residue polypeptide: MTELDSLWEAIQNSFRKSKGDTTYKNLIAPAKPLDFANGRLRIQLPSQYHRDFWEQLTDQVVEIVYQRTGQEIRPDYVLATDPTPLAQTPPRPQSTFKEETPLNPEYTFQTFIEGRSNMMAYASAFAASESPGDQYNPLLIYGGVGLGKTHLMQAIANNMKFHNPSVRIKYVTSENFMNDFVNSIKSGTQEEFRREYRDLDALLVDDIQFFASKGETQTEFFNTFNVLYDNKKQIVLTSDKDPREIPNLTERLVSRFMWGVPVEITSPALETRIAILKSKAEEEHLDVPNDVLNFVAQRINTNVRELEGALMRIRVFSELHQQPITLKLATEALQGMVANTETTVTIDLIQKRVATYYNINQSDITGKKRTKNIVVPRQIAMYLSRELTDNSLPKIGKEFGGKDHTTVLHAIDKIERQVQEDARLQGDLVKLKNDLQA.

Residues 1–71 (MTELDSLWEA…VEIVYQRTGQ (71 aa)) are domain I, interacts with DnaA modulators. Residues 71–101 (QEIRPDYVLATDPTPLAQTPPRPQSTFKEET) are domain II. Positions 81–100 (TDPTPLAQTPPRPQSTFKEE) are disordered. A domain III, AAA+ region region spans residues 102–318 (PLNPEYTFQT…GALMRIRVFS (217 aa)). The ATP site is built by Gly146, Gly148, Lys149, and Thr150. The tract at residues 319–438 (ELHQQPITLK…LVKLKNDLQA (120 aa)) is domain IV, binds dsDNA.

This sequence belongs to the DnaA family. In terms of assembly, oligomerizes as a right-handed, spiral filament on DNA at oriC.

The protein localises to the cytoplasm. Functionally, plays an essential role in the initiation and regulation of chromosomal replication. ATP-DnaA binds to the origin of replication (oriC) to initiate formation of the DNA replication initiation complex once per cell cycle. Binds the DnaA box (a 9 base pair repeat at the origin) and separates the double-stranded (ds)DNA. Forms a right-handed helical filament on oriC DNA; dsDNA binds to the exterior of the filament while single-stranded (ss)DNA is stabiized in the filament's interior. The ATP-DnaA-oriC complex binds and stabilizes one strand of the AT-rich DNA unwinding element (DUE), permitting loading of DNA polymerase. After initiation quickly degrades to an ADP-DnaA complex that is not apt for DNA replication. Binds acidic phospholipids. The polypeptide is Chromosomal replication initiator protein DnaA (Limosilactobacillus fermentum (strain NBRC 3956 / LMG 18251) (Lactobacillus fermentum)).